The primary structure comprises 183 residues: uncharacterized protein (183 aa).

The 144-residue stretch at Met-27–Leu-170 folds into the SIS domain.

This sequence belongs to the SIS family. PHI subfamily.

This is an uncharacterized protein from Archaeoglobus fulgidus (strain ATCC 49558 / DSM 4304 / JCM 9628 / NBRC 100126 / VC-16).